Here is a 451-residue protein sequence, read N- to C-terminus: Arginine biosynthesis bifunctional protein ArgJ, mitochondrial (451 aa).

The substrate site is built by Thr180, Lys209, Thr220, Glu307, Asn446, and Thr451. Catalysis depends on Thr220, which acts as the Nucleophile.

Belongs to the ArgJ family. Heterodimer of an alpha and a beta chain. The alpha and beta chains are autoproteolytically processed from a single precursor protein within the mitochondrion.

It is found in the mitochondrion matrix. It carries out the reaction N(2)-acetyl-L-ornithine + L-glutamate = N-acetyl-L-glutamate + L-ornithine. The catalysed reaction is L-glutamate + acetyl-CoA = N-acetyl-L-glutamate + CoA + H(+). Its pathway is amino-acid biosynthesis; L-arginine biosynthesis; L-ornithine and N-acetyl-L-glutamate from L-glutamate and N(2)-acetyl-L-ornithine (cyclic): step 1/1. It functions in the pathway amino-acid biosynthesis; L-arginine biosynthesis; N(2)-acetyl-L-ornithine from L-glutamate: step 1/4. In terms of biological role, catalyzes two activities which are involved in the cyclic version of arginine biosynthesis: the synthesis of acetylglutamate from glutamate and acetyl-CoA, and of ornithine by transacetylation between acetylornithine and glutamate. The chain is Arginine biosynthesis bifunctional protein ArgJ, mitochondrial from Fusarium vanettenii (strain ATCC MYA-4622 / CBS 123669 / FGSC 9596 / NRRL 45880 / 77-13-4) (Fusarium solani subsp. pisi).